The primary structure comprises 43 residues: Potassium channel toxin gamma-KTx 4.1 (43 aa).

4 cysteine pairs are disulfide-bonded: cysteine 5/cysteine 23, cysteine 11/cysteine 34, cysteine 20/cysteine 39, and cysteine 24/cysteine 41.

The protein belongs to the ergtoxin family. Gamma-KTx 4 subfamily. Expressed by the venom gland.

The protein resides in the secreted. In terms of biological role, reversibly blocks Kv11/ERG potassium channels. The protein is Potassium channel toxin gamma-KTx 4.1 of Centruroides limpidus (Mexican scorpion).